The chain runs to 103 residues: uncharacterized protein (103 aa).

This is an uncharacterized protein from Caenorhabditis elegans.